Reading from the N-terminus, the 282-residue chain is Elongation factor Ts (282 aa).

Residues T79–V82 form an involved in Mg(2+) ion dislocation from EF-Tu region.

It belongs to the EF-Ts family.

It localises to the cytoplasm. Its function is as follows. Associates with the EF-Tu.GDP complex and induces the exchange of GDP to GTP. It remains bound to the aminoacyl-tRNA.EF-Tu.GTP complex up to the GTP hydrolysis stage on the ribosome. This is Elongation factor Ts from Shewanella loihica (strain ATCC BAA-1088 / PV-4).